Consider the following 371-residue polypeptide: Carbamoyl phosphate synthase small chain (371 aa).

The CPSase stretch occupies residues 1–182 (MGVHKKGYLV…KNPIVHTPKN (182 aa)). L-glutamine is bound by residues Ser-49, Gly-235, and Gly-237. A Glutamine amidotransferase type-1 domain is found at 186–371 (RVVVLDLGVK…EFVKILEGRK (186 aa)). Cys-263 (nucleophile) is an active-site residue. Residues Leu-264, Gln-267, Asn-305, Gly-307, and Tyr-308 each coordinate L-glutamine. Residues His-346 and Glu-348 contribute to the active site.

Belongs to the CarA family. In terms of assembly, composed of two chains; the small (or glutamine) chain promotes the hydrolysis of glutamine to ammonia, which is used by the large (or ammonia) chain to synthesize carbamoyl phosphate. Tetramer of heterodimers (alpha,beta)4.

It carries out the reaction hydrogencarbonate + L-glutamine + 2 ATP + H2O = carbamoyl phosphate + L-glutamate + 2 ADP + phosphate + 2 H(+). The enzyme catalyses L-glutamine + H2O = L-glutamate + NH4(+). It functions in the pathway amino-acid biosynthesis; L-arginine biosynthesis; carbamoyl phosphate from bicarbonate: step 1/1. The protein operates within pyrimidine metabolism; UMP biosynthesis via de novo pathway; (S)-dihydroorotate from bicarbonate: step 1/3. Small subunit of the glutamine-dependent carbamoyl phosphate synthetase (CPSase). CPSase catalyzes the formation of carbamoyl phosphate from the ammonia moiety of glutamine, carbonate, and phosphate donated by ATP, constituting the first step of 2 biosynthetic pathways, one leading to arginine and/or urea and the other to pyrimidine nucleotides. The small subunit (glutamine amidotransferase) binds and cleaves glutamine to supply the large subunit with the substrate ammonia. The polypeptide is Carbamoyl phosphate synthase small chain (Pyrococcus furiosus (strain ATCC 43587 / DSM 3638 / JCM 8422 / Vc1)).